We begin with the raw amino-acid sequence, 295 residues long: MDKVKLERMKNDKGFIAALDQSGGSTPKALAAYGVPETAYSNEKEMFDLVHAMRTRIITGKAFNSNNILGAILFEQTMEREIEGMPTADFLWEKKKILPFLKVDKGLADLKDGVQLMKPIPNLDAMLKHAVEKHIFGTKMRSVIKEANPKGIKAVVDQQFELGIQIAKAGLVPIIEPEVDIKSPDKAKCEEILKKELEEHLKTLPKDLLVMFKLSIPTKENLYEEFTKHPQVVRVVALSGGYSRDDANKLLAKNRGMIASFSRALAEGLFASQSDAEFNATLEKTIKGVYEASIT.

Residue Glu176 is the Proton acceptor of the active site. Lys213 acts as the Schiff-base intermediate with dihydroxyacetone-P in catalysis.

Belongs to the class I fructose-bisphosphate aldolase family.

The enzyme catalyses beta-D-fructose 1,6-bisphosphate = D-glyceraldehyde 3-phosphate + dihydroxyacetone phosphate. Its pathway is carbohydrate degradation; glycolysis; D-glyceraldehyde 3-phosphate and glycerone phosphate from D-glucose: step 4/4. The protein is Fructose-bisphosphate aldolase class 1 of Treponema denticola (strain ATCC 35405 / DSM 14222 / CIP 103919 / JCM 8153 / KCTC 15104).